We begin with the raw amino-acid sequence, 320 residues long: Acetyl-coenzyme A carboxylase carboxyl transferase subunit alpha (320 aa).

A CoA carboxyltransferase C-terminal domain is found at Arg41 to Glu295.

Belongs to the AccA family. As to quaternary structure, acetyl-CoA carboxylase is a heterohexamer composed of biotin carboxyl carrier protein (AccB), biotin carboxylase (AccC) and two subunits each of ACCase subunit alpha (AccA) and ACCase subunit beta (AccD).

The protein resides in the cytoplasm. It catalyses the reaction N(6)-carboxybiotinyl-L-lysyl-[protein] + acetyl-CoA = N(6)-biotinyl-L-lysyl-[protein] + malonyl-CoA. Its pathway is lipid metabolism; malonyl-CoA biosynthesis; malonyl-CoA from acetyl-CoA: step 1/1. Its function is as follows. Component of the acetyl coenzyme A carboxylase (ACC) complex. First, biotin carboxylase catalyzes the carboxylation of biotin on its carrier protein (BCCP) and then the CO(2) group is transferred by the carboxyltransferase to acetyl-CoA to form malonyl-CoA. In Bradyrhizobium sp. (strain ORS 278), this protein is Acetyl-coenzyme A carboxylase carboxyl transferase subunit alpha.